Here is a 222-residue protein sequence, read N- to C-terminus: Ribosomal RNA small subunit methyltransferase G (222 aa).

Residues Gly-73, Leu-78, 124–125, and Arg-137 each bind S-adenosyl-L-methionine; that span reads AE.

This sequence belongs to the methyltransferase superfamily. RNA methyltransferase RsmG family.

It is found in the cytoplasm. Specifically methylates the N7 position of guanine in position 518 of 16S rRNA. This is Ribosomal RNA small subunit methyltransferase G from Acidothermus cellulolyticus (strain ATCC 43068 / DSM 8971 / 11B).